Reading from the N-terminus, the 101-residue chain is uncharacterized protein (101 aa).

An N-terminal signal peptide occupies residues 1 to 18 (MSINALLYVLSLALLIWT). A helical membrane pass occupies residues 62 to 82 (FQFDSIPSSSLSLSPFPFLFF).

The protein resides in the membrane. This is an uncharacterized protein from Saccharomyces cerevisiae (strain ATCC 204508 / S288c) (Baker's yeast).